The sequence spans 474 residues: Protein U79/U80 (474 aa).

Basic and acidic residues-rich tracts occupy residues 156–165 and 175–219; these read DRKKHDDEHR and RKVE…KRQK. 2 disordered regions span residues 156 to 219 and 412 to 441; these read DRKK…KRQK and SGQN…SRTQ. Residues 417 to 432 show a composition bias toward basic residues; the sequence is GRARGRGRGRAPRRRN.

This sequence belongs to the herpesviridae U79/UL112 family.

It is found in the host nucleus. Functionally, may be involved in DNA replication. In Homo sapiens (Human), this protein is Protein U79/U80 (U79/U80).